A 235-amino-acid polypeptide reads, in one-letter code: ATP-dependent dethiobiotin synthetase BioD (235 aa).

Residue 12-17 (GVGKTF) participates in ATP binding. Threonine 16 provides a ligand contact to Mg(2+). The active site involves lysine 37. Residue serine 41 participates in substrate binding. ATP contacts are provided by residues aspartate 51, 112 to 115 (EGAG), and 202 to 204 (PKL). Positions 51 and 112 each coordinate Mg(2+).

This sequence belongs to the dethiobiotin synthetase family. In terms of assembly, homodimer. The cofactor is Mg(2+).

It is found in the cytoplasm. The catalysed reaction is (7R,8S)-7,8-diammoniononanoate + CO2 + ATP = (4R,5S)-dethiobiotin + ADP + phosphate + 3 H(+). The protein operates within cofactor biosynthesis; biotin biosynthesis; biotin from 7,8-diaminononanoate: step 1/2. In terms of biological role, catalyzes a mechanistically unusual reaction, the ATP-dependent insertion of CO2 between the N7 and N8 nitrogen atoms of 7,8-diaminopelargonic acid (DAPA, also called 7,8-diammoniononanoate) to form a ureido ring. In Bacillus licheniformis (strain ATCC 14580 / DSM 13 / JCM 2505 / CCUG 7422 / NBRC 12200 / NCIMB 9375 / NCTC 10341 / NRRL NRS-1264 / Gibson 46), this protein is ATP-dependent dethiobiotin synthetase BioD.